Here is a 259-residue protein sequence, read N- to C-terminus: 5'-nucleotidase SurE (259 aa).

A divalent metal cation contacts are provided by Asp13, Asp14, Ser44, and Asn100.

The protein belongs to the SurE nucleotidase family. The cofactor is a divalent metal cation.

The protein resides in the cytoplasm. It catalyses the reaction a ribonucleoside 5'-phosphate + H2O = a ribonucleoside + phosphate. Nucleotidase that shows phosphatase activity on nucleoside 5'-monophosphates. The chain is 5'-nucleotidase SurE from Bacteroides thetaiotaomicron (strain ATCC 29148 / DSM 2079 / JCM 5827 / CCUG 10774 / NCTC 10582 / VPI-5482 / E50).